Reading from the N-terminus, the 651-residue chain is Threonine--tRNA ligase (651 aa).

One can recognise a TGS domain in the interval 1-61; sequence MPTIQLPDGS…DKDVSLRIIT (61 aa). The interval 242-533 is catalytic; it reads DHRLLAKKMD…LLEESAGKLP (292 aa). 3 residues coordinate Zn(2+): Cys-333, His-384, and His-510. Positions 631 to 651 are disordered; that stretch reads ISQRSRKSPAPSPLFPVGGES.

This sequence belongs to the class-II aminoacyl-tRNA synthetase family. Homodimer. Zn(2+) is required as a cofactor.

It is found in the cytoplasm. It catalyses the reaction tRNA(Thr) + L-threonine + ATP = L-threonyl-tRNA(Thr) + AMP + diphosphate + H(+). In terms of biological role, catalyzes the attachment of threonine to tRNA(Thr) in a two-step reaction: L-threonine is first activated by ATP to form Thr-AMP and then transferred to the acceptor end of tRNA(Thr). Also edits incorrectly charged L-seryl-tRNA(Thr). The polypeptide is Threonine--tRNA ligase (Coxiella burnetii (strain RSA 493 / Nine Mile phase I)).